Reading from the N-terminus, the 990-residue chain is Leucine--tRNA ligase (990 aa).

The 'HIGH' region signature appears at 74-85 (PYPSGKGLHVGH). The interval 573-602 (LPINLPDVPDYSPKTFDPEDAESDPEAPLS) is disordered. Residues 763-767 (KMGKS) carry the 'KMSKS' region motif. K766 serves as a coordination point for ATP.

Belongs to the class-I aminoacyl-tRNA synthetase family.

The protein resides in the cytoplasm. It catalyses the reaction tRNA(Leu) + L-leucine + ATP = L-leucyl-tRNA(Leu) + AMP + diphosphate. The protein is Leucine--tRNA ligase of Bifidobacterium adolescentis (strain ATCC 15703 / DSM 20083 / NCTC 11814 / E194a).